The chain runs to 326 residues: tRNA uridine(34) hydroxylase (326 aa).

Residues serine 123 to serine 217 form the Rhodanese domain. The active-site Cysteine persulfide intermediate is the cysteine 177. The segment at valine 304–alanine 326 is disordered.

It belongs to the TrhO family.

It carries out the reaction uridine(34) in tRNA + AH2 + O2 = 5-hydroxyuridine(34) in tRNA + A + H2O. Functionally, catalyzes oxygen-dependent 5-hydroxyuridine (ho5U) modification at position 34 in tRNAs. The polypeptide is tRNA uridine(34) hydroxylase (Shewanella sediminis (strain HAW-EB3)).